The chain runs to 135 residues: MAAATETGQAAVPSRKRRRGRRPPASDPQTLARLAAGPWLPGTLTCPERTGGDAATRSARPPVLPPPPRPPQRRCRHLVSRAGTPRCACAGTASEGPRRGRAAILSVAGSAGSSHPACFRPPPLLPIRPCCSLWR.

Residues 1–75 form a disordered region; sequence MAAATETGQA…PPPRPPQRRC (75 aa).

This is an uncharacterized protein from Homo sapiens (Human).